The chain runs to 445 residues: Maltoporin 2 (445 aa).

The N-terminal stretch at 1-25 (MKMKAKWLPIAAAVTAALASQAAFA) is a signal peptide.

This sequence belongs to the porin LamB (TC 1.B.3) family. In terms of assembly, homotrimer formed of three 18-stranded antiparallel beta-barrels, containing three independent channels.

Its subcellular location is the cell outer membrane. The catalysed reaction is beta-maltose(in) = beta-maltose(out). Involved in the transport of maltose and maltodextrins. The protein is Maltoporin 2 of Aeromonas salmonicida (strain A449).